Here is a 159-residue protein sequence, read N- to C-terminus: Large ribosomal subunit protein uL15 (159 aa).

A compositionally biased stretch (basic and acidic residues) spans 1-13 (MRIHEVTPKEGST). The segment at 1–51 (MRIHEVTPKEGSTKRRRRVGRGISAGQGASCGFGMRGQKSRSGTGTKAGFE) is disordered. Residues 23–35 (ISAGQGASCGFGM) are compositionally biased toward gly residues.

It belongs to the universal ribosomal protein uL15 family. Part of the 50S ribosomal subunit.

Functionally, binds to the 23S rRNA. The sequence is that of Large ribosomal subunit protein uL15 from Rippkaea orientalis (strain PCC 8801 / RF-1) (Cyanothece sp. (strain PCC 8801)).